Consider the following 313-residue polypeptide: Proclavaminate amidinohydrolase (313 aa).

The Mn(2+) site is built by histidine 121, aspartate 144, histidine 146, aspartate 148, aspartate 235, and aspartate 237.

It belongs to the arginase family. As to quaternary structure, homohexamer. It depends on Mn(2+) as a cofactor.

The catalysed reaction is amidinoproclavaminate + H2O = proclavaminate + urea. It functions in the pathway antibiotic biosynthesis; clavulanate biosynthesis; clavulanate from D-glyceraldehyde 3-phosphate and L-arginine: step 4/8. The sequence is that of Proclavaminate amidinohydrolase (pah) from Streptomyces clavuligerus.